The sequence spans 471 residues: Proton-coupled amino acid transporter-like protein pathetic (471 aa).

A glycan (N-linked (GlcNAc...) asparagine) is linked at asparagine 61. Transmembrane regions (helical) follow at residues 81 to 101 (FAFM…TAFI), 153 to 173 (ILFG…VIVA), 187 to 207 (AVSL…IAWV), 216 to 236 (VSMV…YYLV), 253 to 273 (LPQF…VMPL), 283 to 303 (FLGI…IYML), 337 to 357 (LISL…LEII), 375 to 395 (VLRT…PTIG), 397 to 417 (FMGL…PVVI), and 432 to 452 (WILW…VFGT).

It belongs to the amino acid/polyamine transporter 2 family. As to expression, in third instar larvae, expressed at highest levels in the brain and digestive system with particularly high levels in surface glia of the brain (at protein level). In third instar larvae, expressed in all cells of the body wall (at protein level). Within the body wall of third instar larvae, most highly expressed in epithelial cells and sensory neurons. Expressed at a similar level in all da neurons (at protein level). Widely expressed during embryonic and late larval stages. Levels are highly dynamic in embryogenesis with surges of expression in many structures, including muscle primordia, salivary glands, proventriculus, trachea and gonads. Expressed in all or most cells of larval imaginal disks. Expression is also particularly strong in the pouch and hinge regions of the wing disk and in the morphogenetic furrow of the eye disk.

Its subcellular location is the cell membrane. It is found in the lysosome membrane. The protein resides in the late endosome membrane. The protein localises to the cell projection. It localises to the axon. Its subcellular location is the dendrite. It is found in the perikaryon. The protein resides in the cytoplasm. In terms of biological role, amino acid transporter which has pH-dependent electrogenic transport activity for alanine and glycine but not for proline. Plays a role in positive regulation of growth by directly or indirectly modulating the effects of the TOR signaling pathway. Required in a cell-autonomous manner for dendrite growth in neurons with large dendrite arbors. The protein is Proton-coupled amino acid transporter-like protein pathetic of Drosophila melanogaster (Fruit fly).